A 529-amino-acid chain; its full sequence is MQQRRPVRRALLSVSDKAGIIEFAQALSARGVELLSTGGTARLLAEKGLPVTEVSDYTGFPEMMDGRVKTLHPKVHGGILGRRGQDDAIMEQHHIAPIDMVVVNLYPFAETVAREGCSLEDAVENIDIGGPTMVRSAAKNHKDVAIVVKSSDYDAIIKEMDANEGSLTLDTRFDLAIKAFEHTAAYDSMIANYFGSMVPAYHGESKEAAGRFPRTLNLNFIKKQDMRYGENSHQQAAFYIEENVKEASVATAQQVQGKALSYNNIADTDAALECVKEFNEPACVIVKHANPCGVAVSTTILDAYDRAYKTDPTSAFGGIIAFNRELDAETAQAIISRQFVEVIIAPSATEDALKITAAKQNVRVLTCGQWAQRVPGLDFKRVNGGLLVQDRDLGMVSEAELRVVSKRQPTEQELRDALFCWKVAKFVKSNAIVYAKENMTIGIGAGQMSRVYSAKIAGIKAADEGLEVKGSAMASDAFFPFRDGIDAAAAVGVSCVIQPGGSIRDDEVIAAADEHGIAMIFTDMRHFRH.

Residues 1–148 form the MGS-like domain; that stretch reads MQQRRPVRRA…KNHKDVAIVV (148 aa).

Belongs to the PurH family.

The catalysed reaction is (6R)-10-formyltetrahydrofolate + 5-amino-1-(5-phospho-beta-D-ribosyl)imidazole-4-carboxamide = 5-formamido-1-(5-phospho-D-ribosyl)imidazole-4-carboxamide + (6S)-5,6,7,8-tetrahydrofolate. It catalyses the reaction IMP + H2O = 5-formamido-1-(5-phospho-D-ribosyl)imidazole-4-carboxamide. It functions in the pathway purine metabolism; IMP biosynthesis via de novo pathway; 5-formamido-1-(5-phospho-D-ribosyl)imidazole-4-carboxamide from 5-amino-1-(5-phospho-D-ribosyl)imidazole-4-carboxamide (10-formyl THF route): step 1/1. It participates in purine metabolism; IMP biosynthesis via de novo pathway; IMP from 5-formamido-1-(5-phospho-D-ribosyl)imidazole-4-carboxamide: step 1/1. The sequence is that of Bifunctional purine biosynthesis protein PurH from Salmonella paratyphi A (strain ATCC 9150 / SARB42).